A 37-amino-acid polypeptide reads, in one-letter code: Photosystem II reaction center protein M (37 aa).

Residues 7–27 (GFIAVLMFLAIPTAFLLIPYV) form a helical membrane-spanning segment.

It belongs to the PsbM family. PSII is composed of 1 copy each of membrane proteins PsbA, PsbB, PsbC, PsbD, PsbE, PsbF, PsbH, PsbI, PsbJ, PsbK, PsbL, PsbM, PsbT, PsbX, PsbY, PsbZ, Psb30/Ycf12, at least 3 peripheral proteins of the oxygen-evolving complex and a large number of cofactors. It forms dimeric complexes.

The protein resides in the plastid. The protein localises to the chloroplast thylakoid membrane. Its function is as follows. One of the components of the core complex of photosystem II (PSII). PSII is a light-driven water:plastoquinone oxidoreductase that uses light energy to abstract electrons from H(2)O, generating O(2) and a proton gradient subsequently used for ATP formation. It consists of a core antenna complex that captures photons, and an electron transfer chain that converts photonic excitation into a charge separation. This subunit is found at the monomer-monomer interface. The polypeptide is Photosystem II reaction center protein M (Pinus koraiensis (Korean pine)).